Consider the following 325-residue polypeptide: GMP reductase (325 aa).

The active-site Thioimidate intermediate is the Cys174. Position 203–226 (203–226) interacts with NADP(+); that stretch reads IIADGGIRTHGDIAKSVRFGATMV.

It belongs to the IMPDH/GMPR family. GuaC type 2 subfamily.

The catalysed reaction is IMP + NH4(+) + NADP(+) = GMP + NADPH + 2 H(+). Functionally, catalyzes the irreversible NADPH-dependent deamination of GMP to IMP. It functions in the conversion of nucleobase, nucleoside and nucleotide derivatives of G to A nucleotides, and in maintaining the intracellular balance of A and G nucleotides. In Enterococcus faecalis (strain ATCC 700802 / V583), this protein is GMP reductase.